Consider the following 255-residue polypeptide: 5'-nucleotidase SurE (255 aa).

A divalent metal cation contacts are provided by Asp8, Asp9, Ser39, and Asn91.

Belongs to the SurE nucleotidase family. A divalent metal cation serves as cofactor.

It is found in the cytoplasm. The catalysed reaction is a ribonucleoside 5'-phosphate + H2O = a ribonucleoside + phosphate. Functionally, nucleotidase that shows phosphatase activity on nucleoside 5'-monophosphates. The protein is 5'-nucleotidase SurE of Acinetobacter baumannii (strain ATCC 17978 / DSM 105126 / CIP 53.77 / LMG 1025 / NCDC KC755 / 5377).